Reading from the N-terminus, the 122-residue chain is Serum amyloid A-3 protein (122 aa).

The N-terminal stretch at 1–18 (MKPSIAIILCILILGVDS) is a signal peptide. The segment at 87–122 (TGHGAEDSRADQFANEWGRSGKDPNHFRPAGLPKRY) is disordered.

Belongs to the SAA family. Found in various tissues.

It localises to the secreted. Major acute phase reactant. Apolipoprotein of the HDL complex. In vitro exhibits antimicrobial activity against Escherichia coli, Streptococcus uberis and Pseudomonas aeruginosa. This chain is Serum amyloid A-3 protein (Saa3), found in Mus musculus (Mouse).